Consider the following 312-residue polypeptide: Ribosomal RNA small subunit methyltransferase H (312 aa).

S-adenosyl-L-methionine contacts are provided by residues 33–35 (SGH), Asp53, Phe80, Asp101, and Gln108.

Belongs to the methyltransferase superfamily. RsmH family.

It localises to the cytoplasm. It catalyses the reaction cytidine(1402) in 16S rRNA + S-adenosyl-L-methionine = N(4)-methylcytidine(1402) in 16S rRNA + S-adenosyl-L-homocysteine + H(+). Specifically methylates the N4 position of cytidine in position 1402 (C1402) of 16S rRNA. In Desulforapulum autotrophicum (strain ATCC 43914 / DSM 3382 / VKM B-1955 / HRM2) (Desulfobacterium autotrophicum), this protein is Ribosomal RNA small subunit methyltransferase H.